Reading from the N-terminus, the 265-residue chain is MKKTNIYDLYKLKEQNKKFASITAYDATFANLFFKKGIRTILVGDSLGMTIQGHSSTVPVKIDEMMYHTKCVRRGAPSCLIISDLPFMSYNNINDALNNSKKLIQSGANIVKLEGGLWVSDIIHELNTRSIPVCGHIGLTPQSINMQGSYKIQGRNNNDAIRLMEEAISIEESGAKLLVLECIIQKLSNNITKKLNIPTIGIGSGKKTDGQILVMQDVLGITIEGKIPSFSKNFTKNKFGIEKAIELYIEEVENELFPSENHSFN.

Aspartate 45 and aspartate 84 together coordinate Mg(2+). Residues 45 to 46 (DS), aspartate 84, and lysine 112 each bind 3-methyl-2-oxobutanoate. Glutamate 114 lines the Mg(2+) pocket. The active-site Proton acceptor is the glutamate 181.

Belongs to the PanB family. As to quaternary structure, homodecamer; pentamer of dimers. It depends on Mg(2+) as a cofactor.

The protein localises to the cytoplasm. The enzyme catalyses 3-methyl-2-oxobutanoate + (6R)-5,10-methylene-5,6,7,8-tetrahydrofolate + H2O = 2-dehydropantoate + (6S)-5,6,7,8-tetrahydrofolate. Its pathway is cofactor biosynthesis; (R)-pantothenate biosynthesis; (R)-pantoate from 3-methyl-2-oxobutanoate: step 1/2. Catalyzes the reversible reaction in which hydroxymethyl group from 5,10-methylenetetrahydrofolate is transferred onto alpha-ketoisovalerate to form ketopantoate. The sequence is that of 3-methyl-2-oxobutanoate hydroxymethyltransferase from Wigglesworthia glossinidia brevipalpis.